A 161-amino-acid chain; its full sequence is Peroxynitrite isomerase 2 (161 aa).

The GXWXGXG signature appears at 17–23 (GTWAGQG). Residue His152 coordinates heme b.

Belongs to the nitrobindin family. In terms of assembly, homodimer. Requires heme b as cofactor.

The catalysed reaction is peroxynitrite = nitrate. Its pathway is nitrogen metabolism. Heme-binding protein able to scavenge peroxynitrite and to protect free L-tyrosine against peroxynitrite-mediated nitration, by acting as a peroxynitrite isomerase that converts peroxynitrite to nitrate. Therefore, this protein likely plays a role in peroxynitrite sensing and in the detoxification of reactive nitrogen and oxygen species (RNS and ROS, respectively). Is able to bind nitric oxide (NO) in vitro, but may act as a sensor of peroxynitrite levels in vivo. This Mycobacterium ulcerans (strain Agy99) protein is Peroxynitrite isomerase 2.